The chain runs to 254 residues: Protein CbbY, plasmid (254 aa).

This sequence belongs to the HAD-like hydrolase superfamily. CbbY/CbbZ/Gph/YieH family.

The chain is Protein CbbY, plasmid (cbbYP) from Cupriavidus necator (strain ATCC 17699 / DSM 428 / KCTC 22496 / NCIMB 10442 / H16 / Stanier 337) (Ralstonia eutropha).